The following is a 438-amino-acid chain: Coiled-coil domain-containing protein 78 (438 aa).

Coiled coils occupy residues 74–105 (HLHEQHEAEIFQLKSEILRLESRVLELELRGD) and 217–246 (SCQGQLRQAEAENARLQLQLKKLKDEYVLR). A disordered region spans residues 345–381 (FSHREDQHGGPGALLSSPKKRPGGASQGGTSEPQGLD).

Belongs to the CCDC78 family. Expressed primarily in skeletal muscle.

It is found in the cytoplasm. It localises to the cytoskeleton. The protein localises to the microtubule organizing center. The protein resides in the centrosome. Its subcellular location is the centriole. It is found in the perinuclear region. It localises to the cell membrane. The protein localises to the sarcolemma. The protein resides in the sarcoplasmic reticulum. Functionally, component of the deuterosome, a structure that promotes de novo centriole amplification in multiciliated cells that can generate more than 100 centrioles. Deuterosome-mediated centriole amplification occurs in terminally differentiated multiciliated cells (G1/0) and not in S phase. Essential for centriole amplification and is required for CEP152 localization to the deuterosome. The chain is Coiled-coil domain-containing protein 78 (CCDC78) from Homo sapiens (Human).